Reading from the N-terminus, the 370-residue chain is 3-dehydroquinate synthase (370 aa).

NAD(+) is bound by residues 108–112 (GVIGD), 132–133 (TT), Lys-145, and Lys-154. Positions 187, 249, and 267 each coordinate Zn(2+).

This sequence belongs to the sugar phosphate cyclases superfamily. Dehydroquinate synthase family. Co(2+) serves as cofactor. It depends on Zn(2+) as a cofactor. Requires NAD(+) as cofactor.

It localises to the cytoplasm. It catalyses the reaction 7-phospho-2-dehydro-3-deoxy-D-arabino-heptonate = 3-dehydroquinate + phosphate. It functions in the pathway metabolic intermediate biosynthesis; chorismate biosynthesis; chorismate from D-erythrose 4-phosphate and phosphoenolpyruvate: step 2/7. Functionally, catalyzes the conversion of 3-deoxy-D-arabino-heptulosonate 7-phosphate (DAHP) to dehydroquinate (DHQ). This is 3-dehydroquinate synthase from Cereibacter sphaeroides (strain ATCC 17025 / ATH 2.4.3) (Rhodobacter sphaeroides).